Here is a 185-residue protein sequence, read N- to C-terminus: Large ribosomal subunit protein uL5 (185 aa).

This sequence belongs to the universal ribosomal protein uL5 family. In terms of assembly, part of the 50S ribosomal subunit; part of the 5S rRNA subcomplex. Contacts the 5S rRNA and the P site tRNA. Forms a bridge to the 30S subunit in the 70S ribosome. In terms of processing, both N-terminus methionine truncation and retention have been observed for this protein. Post-translationally, may be methylated twice, on undetermined residues.

This is one of the proteins that bind and probably mediate the attachment of the 5S RNA into the large ribosomal subunit, where it forms part of the central protuberance. In the 70S ribosome it contacts protein S13 of the 30S subunit (bridge B1b), connecting the 2 subunits; this bridge is implicated in subunit movement. Contacts the P site tRNA; the 5S rRNA and some of its associated proteins might help stabilize positioning of ribosome-bound tRNAs. This chain is Large ribosomal subunit protein uL5, found in Rhodopseudomonas palustris (strain ATCC BAA-98 / CGA009).